Reading from the N-terminus, the 328-residue chain is Cell division protein ZipA (328 aa).

Topologically, residues 1–4 (MDLN) are periplasmic. Residues 5-25 (TILIIVGIVALVALIVHGLWS) form a helical membrane-spanning segment. Over 26–328 (NRREKSKYFD…NAEQAYLARV (303 aa)) the chain is Cytoplasmic. The segment at 44-82 (SLTSRSHTQEEMVQPNNISPNTYVENGHTPISQPTTEKL) is disordered. Polar residues predominate over residues 57–81 (QPNNISPNTYVENGHTPISQPTTEK).

The protein belongs to the ZipA family. Interacts with FtsZ via their C-terminal domains.

The protein resides in the cell inner membrane. Its function is as follows. Essential cell division protein that stabilizes the FtsZ protofilaments by cross-linking them and that serves as a cytoplasmic membrane anchor for the Z ring. Also required for the recruitment to the septal ring of downstream cell division proteins. This is Cell division protein ZipA from Haemophilus influenzae (strain PittGG).